A 101-amino-acid chain; its full sequence is Small ribosomal subunit protein bS6 (101 aa).

This sequence belongs to the bacterial ribosomal protein bS6 family.

Functionally, binds together with bS18 to 16S ribosomal RNA. This Arthrobacter sp. (strain FB24) protein is Small ribosomal subunit protein bS6.